A 182-amino-acid chain; its full sequence is tRNA-splicing endonuclease (182 aa).

Catalysis depends on residues Tyr119, His127, and Lys158.

This sequence belongs to the tRNA-intron endonuclease family. Archaeal short subfamily. Homotetramer; although the tetramer contains four active sites, only two participate in the cleavage. Therefore, it should be considered as a dimer of dimers.

The catalysed reaction is pretRNA = a 3'-half-tRNA molecule with a 5'-OH end + a 5'-half-tRNA molecule with a 2',3'-cyclic phosphate end + an intron with a 2',3'-cyclic phosphate and a 5'-hydroxyl terminus.. Endonuclease that removes tRNA introns. Cleaves pre-tRNA at the 5'- and 3'-splice sites to release the intron. The products are an intron and two tRNA half-molecules bearing 2',3' cyclic phosphate and 5'-OH termini. Recognizes a pseudosymmetric substrate in which 2 bulged loops of 3 bases are separated by a stem of 4 bp. The sequence is that of tRNA-splicing endonuclease from Saccharolobus solfataricus (strain ATCC 35092 / DSM 1617 / JCM 11322 / P2) (Sulfolobus solfataricus).